A 452-amino-acid chain; its full sequence is Probable ECA polymerase (452 aa).

A run of 11 helical transmembrane segments spans residues 6–26 (FSGL…LTWF), 37–57 (VFFS…TSVL), 63–83 (VGVA…CFYG), 118–138 (VILM…NGFL), 155–175 (GVAL…VYFL), 181–201 (AWLF…MIVG), 207–227 (IIIA…ISLW), 228–248 (MLAA…LKRY), 341–361 (LVVM…GMII), 378–398 (YKAA…IVLA), and 410–430 (VFFL…FWLF).

Belongs to the WzyE family. In terms of assembly, probably part of a complex composed of WzxE, WzyE and WzzE.

It is found in the cell inner membrane. It participates in bacterial outer membrane biogenesis; enterobacterial common antigen biosynthesis. Probably involved in the polymerization of enterobacterial common antigen (ECA) trisaccharide repeat units. The sequence is that of Probable ECA polymerase from Salmonella newport (strain SL254).